Reading from the N-terminus, the 202-residue chain is dTTP/UTP pyrophosphatase (202 aa).

The Proton acceptor role is filled by Asp-71.

It belongs to the Maf family. YhdE subfamily. Requires a divalent metal cation as cofactor.

It is found in the cytoplasm. It carries out the reaction dTTP + H2O = dTMP + diphosphate + H(+). It catalyses the reaction UTP + H2O = UMP + diphosphate + H(+). Its function is as follows. Nucleoside triphosphate pyrophosphatase that hydrolyzes dTTP and UTP. May have a dual role in cell division arrest and in preventing the incorporation of modified nucleotides into cellular nucleic acids. This chain is dTTP/UTP pyrophosphatase, found in Zymomonas mobilis subsp. mobilis (strain ATCC 31821 / ZM4 / CP4).